Consider the following 417-residue polypeptide: Serine hydroxymethyltransferase (417 aa).

(6S)-5,6,7,8-tetrahydrofolate contacts are provided by residues leucine 121 and 125 to 127 (GHL). At lysine 230 the chain carries N6-(pyridoxal phosphate)lysine. Residue 355-357 (SPF) participates in (6S)-5,6,7,8-tetrahydrofolate binding.

The protein belongs to the SHMT family. Homodimer. It depends on pyridoxal 5'-phosphate as a cofactor.

It localises to the cytoplasm. It catalyses the reaction (6R)-5,10-methylene-5,6,7,8-tetrahydrofolate + glycine + H2O = (6S)-5,6,7,8-tetrahydrofolate + L-serine. The protein operates within one-carbon metabolism; tetrahydrofolate interconversion. Its pathway is amino-acid biosynthesis; glycine biosynthesis; glycine from L-serine: step 1/1. Catalyzes the reversible interconversion of serine and glycine with tetrahydrofolate (THF) serving as the one-carbon carrier. This reaction serves as the major source of one-carbon groups required for the biosynthesis of purines, thymidylate, methionine, and other important biomolecules. Also exhibits THF-independent aldolase activity toward beta-hydroxyamino acids, producing glycine and aldehydes, via a retro-aldol mechanism. The sequence is that of Serine hydroxymethyltransferase from Ruthia magnifica subsp. Calyptogena magnifica.